We begin with the raw amino-acid sequence, 362 residues long: UV excision repair protein RAD23 homolog A (362 aa).

A Ubiquitin-like domain is found at 1-81 (MAVTITLKTL…VVVMVTKAKT (81 aa)). Disordered stretches follow at residues 80–160 (KTSP…LVTG) and 201–227 (GIPGSPEPEHGSVQESQVSEQPSTEAG). Low complexity predominate over residues 88–109 (PSEASPTATPESSTSFPSAPAS). A Glycyl lysine isopeptide (Lys-Gly) (interchain with G-Cter in ubiquitin) cross-link involves residue K122. Phosphoserine is present on residues S123, S128, S133, S136, and S138. A compositionally biased stretch (low complexity) spans 126–144 (EESAPTTSPESVSGSVPSS). Residues 161–201 (SEYETMLTEIMSMGYERERVVAALRASYNNPHRAVEYLLTG) form the UBA 1 domain. Phosphoserine is present on residues S205, S294, and S356. Residues 317–357 (PQEKEAIERLKALGFPESLVIQAYFACEKNENLAANFLLSQ) enclose the UBA 2 domain.

The protein belongs to the RAD23 family. As to quaternary structure, interacts with XPC; the interaction is suggesting the existence of a functional equivalent variant XPC complex. Interacts with PSMD4 and PSMC5. Interacts with ATXN3. Interacts with UBQLN2.

The protein localises to the nucleus. Its function is as follows. Multiubiquitin chain receptor involved in modulation of proteasomal degradation. Binds to 'Lys-48'-linked polyubiquitin chains in a length-dependent manner and with a lower affinity to 'Lys-63'-linked polyubiquitin chains. Proposed to be capable to bind simultaneously to the 26S proteasome and to polyubiquitinated substrates and to deliver ubiquitinated proteins to the proteasome. Functionally, involved in nucleotide excision repair and is thought to be functional equivalent for RAD23B in global genome nucleotide excision repair (GG-NER) by association with XPC. In vitro, XPC:RAD23A dimer has NER activity. Can stabilize XPC. This chain is UV excision repair protein RAD23 homolog A (RAD23A), found in Bos taurus (Bovine).